A 288-amino-acid chain; its full sequence is Glycine--tRNA ligase alpha subunit (288 aa).

It belongs to the class-II aminoacyl-tRNA synthetase family. In terms of assembly, tetramer of two alpha and two beta subunits.

It is found in the cytoplasm. It carries out the reaction tRNA(Gly) + glycine + ATP = glycyl-tRNA(Gly) + AMP + diphosphate. The protein is Glycine--tRNA ligase alpha subunit of Rickettsia rickettsii (strain Iowa).